Reading from the N-terminus, the 102-residue chain is MAKLGNVEHIEEKVESELQPPHMYKVVLNNDDYTPMDFVVEVLQRFFEKNEQQAVDIMLAIHNQGKGLCGVFPFGIAETKVFQVNQFARENQHPLLCTLEKV.

This sequence belongs to the ClpS family. In terms of assembly, binds to the N-terminal domain of the chaperone ClpA.

Its function is as follows. Involved in the modulation of the specificity of the ClpAP-mediated ATP-dependent protein degradation. In Shewanella frigidimarina (strain NCIMB 400), this protein is ATP-dependent Clp protease adapter protein ClpS.